Consider the following 108-residue polypeptide: MNSGDATRLHCSNAHAKQTLATLFANRNHSSFYEYAIAFVSTLLFKNNLNLMTACNLINSLINFELNMFGKSLLLNGFVNFCIANSDGVTIQHKMLTNVLSFLLEKYY.

This is an uncharacterized protein from Autographa californica nuclear polyhedrosis virus (AcMNPV).